The following is a 119-amino-acid chain: uncharacterized protein (119 aa).

Positions 67–119 (LGLKEVQKKSNEGLNEVQGVADINKQKRPANSQDSSSVEGDIQNFLEKVTGKN) are disordered. Over residues 95–104 (PANSQDSSSV) the composition is skewed to polar residues.

This is an uncharacterized protein from Anabaena variabilis.